The primary structure comprises 468 residues: Ubiquinone biosynthesis monooxygenase COQ6, mitochondrial (468 aa).

The N-terminal 28 residues, 1–28 (MAARLVSRCGAVRAAPHSGPLVSWRRWS), are a transit peptide targeting the mitochondrion.

It belongs to the UbiH/COQ6 family. Component of a multi-subunit COQ enzyme complex, composed of at least COQ3, COQ4, COQ5, COQ6, COQ7 and COQ9. Interacts with COQ8B and COQ7. The cofactor is FAD. As to expression, widely expressed.

The protein localises to the mitochondrion inner membrane. It is found in the golgi apparatus. The protein resides in the cell projection. The catalysed reaction is 4-hydroxy-3-(all-trans-decaprenyl)benzoate + 2 reduced [2Fe-2S]-[ferredoxin] + O2 + 2 H(+) = 3,4-dihydroxy-5-(all-trans-decaprenyl)benzoate + 2 oxidized [2Fe-2S]-[ferredoxin] + H2O. The enzyme catalyses 2-methoxy-6-(all-trans-decaprenyl)phenol + 2 reduced [2Fe-2S]-[ferredoxin] + O2 + 2 H(+) = 2-methoxy-6-(all-trans-decaprenyl)benzene-1,4-diol + 2 oxidized [2Fe-2S]-[ferredoxin] + H2O. It functions in the pathway cofactor biosynthesis; ubiquinone biosynthesis. Its function is as follows. FAD-dependent monooxygenase required for two non-consecutive steps during ubiquinone biosynthesis. Required for the C5-ring hydroxylation during ubiquinone biosynthesis by catalyzing the hydroxylation of 4-hydroxy-3-(all-trans-decaprenyl)benzoic acid to 3,4-dihydroxy-5-(all-trans-decaprenyl)benzoic acid. Also acts downstream of COQ4, for the C1-hydroxylation during ubiquinone biosynthesis by catalyzing the hydroxylation of 2-methoxy-6-(all-trans-decaprenyl)phenol to 2-methoxy-6-(all-trans-decaprenyl)benzene-1,4-diol. The electrons required for the hydroxylation reaction are funneled indirectly to COQ6 from NADPH via a ferredoxin/ferredoxin reductase system composed of FDX2 and FDXR. The chain is Ubiquinone biosynthesis monooxygenase COQ6, mitochondrial from Homo sapiens (Human).